The primary structure comprises 295 residues: Small ribosomal subunit protein uS2 (295 aa).

Serine 2 is modified (N-acetylserine). Serine 43 carries the post-translational modification Phosphoserine. Lysine 52 is subject to N6-acetyllysine. The interaction with PPP1R16B stretch occupies residues 54–113 (TWEKLLLAARAIVAIENPADVSVISSRNTGQRAVLKFAAATGATPIAGRFTPGTFTNQIQ). At lysine 89 the chain carries N6-acetyllysine; alternate. Lysine 89 is covalently cross-linked (Glycyl lysine isopeptide (Lys-Gly) (interchain with G-Cter in SUMO2); alternate). Threonine 97 is subject to Phosphothreonine. Laminin-binding regions lie at residues 161 to 180 (IPCN…MLAR) and 205 to 229 (RDPE…EFQG). [DE]-W-[ST] repeat units lie at residues 230–232 (EWT), 247–249 (DWS), 266–268 (DWS), 275–277 (DWS), and 293–295 (EWS). The segment at 242 to 295 (QPEVADWSEGVQVPSVPIQQFPTEDWSAQPATEDWSAAPTAQATEWVGATTEWS) is laminin-binding. The disordered stretch occupies residues 266–295 (DWSAQPATEDWSAAPTAQATEWVGATTEWS).

It belongs to the universal ribosomal protein uS2 family. Monomer (37LRP) and homodimer (67LR). Component of the small ribosomal subunit. Mature ribosomes consist of a small (40S) and a large (60S) subunit. The 40S subunit contains about 33 different proteins and 1 molecule of RNA (18S). The 60S subunit contains about 49 different proteins and 3 molecules of RNA (28S, 5.8S and 5S). Interacts with RPS21. Interacts with several laminins including at least LAMB1. Interacts with MDK. Interacts with PRNP. The mature dimeric form interacts with PPP1R16B (via its fourth ankyrin repeat). Interacts with PPP1CA only in the presence of PPP1R16B. Acylated. Acylation may be a prerequisite for conversion of the monomeric 37 kDa laminin receptor precursor (37LRP) to the mature dimeric 67 kDa laminin receptor (67LR), and may provide a mechanism for membrane association. Post-translationally, cleaved by stromelysin-3 (ST3) at the cell surface. Cleavage by stromelysin-3 may be a mechanism to alter cell-extracellular matrix interactions.

The protein localises to the cell membrane. It is found in the cytoplasm. The protein resides in the nucleus. Functionally, required for the assembly and/or stability of the 40S ribosomal subunit. Required for the processing of the 20S rRNA-precursor to mature 18S rRNA in a late step of the maturation of 40S ribosomal subunits. Also functions as a cell surface receptor for laminin. Plays a role in cell adhesion to the basement membrane and in the consequent activation of signaling transduction pathways. May play a role in cell fate determination and tissue morphogenesis. Also acts as a receptor for several other ligands, including the pathogenic prion protein, viruses, and bacteria. Acts as a PPP1R16B-dependent substrate of PPP1CA. Enables malignant tumor cells to penetrate laminin tissue and vessel barriers. Activates precursor thymic anti-OFA/iLRP specific cytotoxic T-cell. May induce CD8 T-suppressor cells secreting IL-10. The chain is Small ribosomal subunit protein uS2 (Rpsa) from Mus musculus (Mouse).